Consider the following 784-residue polypeptide: Endonuclease MutS2 (784 aa).

Position 335–342 (335–342 (GPNTGGKT)) interacts with ATP. Residues 709 to 784 (LDLRGERYED…GTGVTIVELK (76 aa)) enclose the Smr domain.

It belongs to the DNA mismatch repair MutS family. MutS2 subfamily. Homodimer. Binds to stalled ribosomes, contacting rRNA.

Functionally, endonuclease that is involved in the suppression of homologous recombination and thus may have a key role in the control of bacterial genetic diversity. Its function is as follows. Acts as a ribosome collision sensor, splitting the ribosome into its 2 subunits. Detects stalled/collided 70S ribosomes which it binds and splits by an ATP-hydrolysis driven conformational change. Acts upstream of the ribosome quality control system (RQC), a ribosome-associated complex that mediates the extraction of incompletely synthesized nascent chains from stalled ribosomes and their subsequent degradation. Probably generates substrates for RQC. This chain is Endonuclease MutS2, found in Geobacillus kaustophilus (strain HTA426).